The primary structure comprises 182 residues: Protein SYM1 (182 aa).

The next 3 helical transmembrane spans lie at 51 to 70, 98 to 118, and 135 to 155; these read TLRPFLYGAVLFSLVGDKWY, LIFAPIGVPLYYTAMALMEGG, and LLANWIVWPAFQLCNFSLVPV.

The protein belongs to the peroxisomal membrane protein PXMP2/4 family.

Its subcellular location is the mitochondrion inner membrane. May be involved in cellular response to stress. Required to maintain mitochondrial DNA (mtDNA) integrity and stability. The sequence is that of Protein SYM1 (SYM1) from Eremothecium gossypii (strain ATCC 10895 / CBS 109.51 / FGSC 9923 / NRRL Y-1056) (Yeast).